Consider the following 398-residue polypeptide: 2-amino-3-ketobutyrate coenzyme A ligase (398 aa).

111 to 112 (CF) contributes to the pyridoxal 5'-phosphate binding site. His-136 serves as a coordination point for substrate. Pyridoxal 5'-phosphate-binding positions include Ser-185, 210–213 (DDSH), 241–244 (TLGK), and 274–275 (SN). At Lys-244 the chain carries N6-(pyridoxal phosphate)lysine. Arg-368 serves as a coordination point for substrate.

This sequence belongs to the class-II pyridoxal-phosphate-dependent aminotransferase family. In terms of assembly, homodimer. Requires pyridoxal 5'-phosphate as cofactor.

The enzyme catalyses glycine + acetyl-CoA = (2S)-2-amino-3-oxobutanoate + CoA. It functions in the pathway amino-acid degradation; L-threonine degradation via oxydo-reductase pathway; glycine from L-threonine: step 2/2. Functionally, catalyzes the cleavage of 2-amino-3-ketobutyrate to glycine and acetyl-CoA. In Escherichia coli (strain K12), this protein is 2-amino-3-ketobutyrate coenzyme A ligase.